Reading from the N-terminus, the 641-residue chain is Mannosyl-oligosaccharide 1,2-alpha-mannosidase IB (641 aa).

T2 carries the post-translational modification N-acetylthreonine. Residues 2–36 (TTPALLPLSGRRIPPLNLGPPSFPHHRATLRLSEK) lie on the Cytoplasmic side of the membrane. The chain crosses the membrane as a helical; Signal-anchor for type II membrane protein span at residues 37-57 (FILLLILSAFITLCFGAFFFL). Over 58 to 641 (PDSSKHKRFD…STLSGNPAVR (584 aa)) the chain is Lumenal. C462 and C494 are disulfide-bonded. E508 (proton donor) is an active-site residue. T619 contributes to the Ca(2+) binding site. An N-linked (GlcNAc...) asparagine glycan is attached at N631.

Belongs to the glycosyl hydrolase 47 family. It depends on Ca(2+) as a cofactor.

Its subcellular location is the golgi apparatus membrane. It catalyses the reaction N(4)-(alpha-D-Man-(1-&gt;2)-alpha-D-Man-(1-&gt;2)-alpha-D-Man-(1-&gt;3)-[alpha-D-Man-(1-&gt;2)-alpha-D-Man-(1-&gt;3)-[alpha-D-Man-(1-&gt;2)-alpha-D-Man-(1-&gt;6)]-alpha-D-Man-(1-&gt;6)]-beta-D-Man-(1-&gt;4)-beta-D-GlcNAc-(1-&gt;4)-beta-D-GlcNAc)-L-asparaginyl-[protein] (N-glucan mannose isomer 9A1,2,3B1,2,3) + 4 H2O = N(4)-(alpha-D-Man-(1-&gt;3)-[alpha-D-Man-(1-&gt;3)-[alpha-D-Man-(1-&gt;6)]-alpha-D-Man-(1-&gt;6)]-beta-D-Man-(1-&gt;4)-beta-D-GlcNAc-(1-&gt;4)-beta-D-GlcNAc)-L-asparaginyl-[protein] (N-glucan mannose isomer 5A1,2) + 4 beta-D-mannose. The enzyme catalyses N(4)-(alpha-D-Man-(1-&gt;2)-alpha-D-Man-(1-&gt;2)-alpha-D-Man-(1-&gt;3)-[alpha-D-Man-(1-&gt;3)-[alpha-D-Man-(1-&gt;2)-alpha-D-Man-(1-&gt;6)]-alpha-D-Man-(1-&gt;6)]-beta-D-Man-(1-&gt;4)-beta-D-GlcNAc-(1-&gt;4)-beta-D-GlcNAc)-L-asparaginyl-[protein] (N-glucan mannose isomer 8A1,2,3B1,3) + 3 H2O = N(4)-(alpha-D-Man-(1-&gt;3)-[alpha-D-Man-(1-&gt;3)-[alpha-D-Man-(1-&gt;6)]-alpha-D-Man-(1-&gt;6)]-beta-D-Man-(1-&gt;4)-beta-D-GlcNAc-(1-&gt;4)-beta-D-GlcNAc)-L-asparaginyl-[protein] (N-glucan mannose isomer 5A1,2) + 3 beta-D-mannose. It participates in protein modification; protein glycosylation. Its activity is regulated as follows. Inhibited by both 1-deoxymannojirimycin and kifunensine. Its function is as follows. Involved in the maturation of Asn-linked oligosaccharides. Progressively trim alpha-1,2-linked mannose residues from Man(9)GlcNAc(2) to produce Man(5)GlcNAc(2). The chain is Mannosyl-oligosaccharide 1,2-alpha-mannosidase IB (Man1a2) from Mus musculus (Mouse).